The primary structure comprises 113 residues: Ranasmurfin (113 aa).

Y2 carries the post-translational modification 2',4',5'-topaquinone. Positions 2-31 (YACSFPPSEIPGSKECLAEALQKHQGFKKK) form a cross-link, lysine tyrosylquinone (Tyr-Lys). Intrachain disulfides connect C4–C62, C17–C65, and C37–C101. S9 is modified (aminomalonic acid (Ser); in chain B). Residues 17–65 (CLAEALQKHQGFKKKSYALICAYLNYKEDAENYERAAEDFDSAVKCTGC) constitute a cross-link (S-cysteinyl 3-(oxidosulfanyl)alanine (Cys-Cys); in chain B). The segment at residues 30–108 (KKSYALICAY…SLCTLFQKLY (79 aa)) is a cross-link (lysine tyrosylquinone (Lys-Tyr)). C65 is subject to Cysteine sulfenic acid (-SOH); in chain B. Y108 bears the 2',4',5'-topaquinone mark. Positions 108 and 112 each coordinate Zn(2+). Y108 participates in a covalent cross-link: 5'-tyrosyl-5'-aminotyrosine (Tyr-Tyr) (interchain with Y-108).

As to quaternary structure, homodimer. The two chains, designated A and B, differ in their modifications, but not, it is thought, in their sequence. Zn(2+) is required as a cofactor. As to expression, foam nest.

The protein resides in the secreted. This is Ranasmurfin from Polypedates leucomystax (Common tree frog).